We begin with the raw amino-acid sequence, 735 residues long: Translation initiation factor IF-2, chloroplastic (735 aa).

The 173-residue stretch at 239–411 folds into the tr-type G domain; the sequence is RRAPIVTILG…ILLMADIENY (173 aa). Positions 248 to 255 are G1; that stretch reads GHVDHGKT. GTP is bound at residue 248 to 255; that stretch reads GHVDHGKT. Residues 273-277 are G2; sequence GITQK. The G3 stretch occupies residues 298–301; that stretch reads DTPG. GTP is bound by residues 298–302 and 352–355; these read DTPGH and NKID. Residues 352-355 are G4; the sequence is NKID. The G5 stretch occupies residues 388–390; it reads SAS.

It belongs to the TRAFAC class translation factor GTPase superfamily. Classic translation factor GTPase family. IF-2 subfamily.

It localises to the plastid. Its subcellular location is the chloroplast. Functionally, one of the essential components for the initiation of protein synthesis. Protects formylmethionyl-tRNA from spontaneous hydrolysis and promotes its binding to the 30S ribosomal subunits. Also involved in the hydrolysis of GTP during the formation of the 70S ribosomal complex. The polypeptide is Translation initiation factor IF-2, chloroplastic (infB) (Guillardia theta (Cryptophyte)).